The sequence spans 715 residues: Polyribonucleotide nucleotidyltransferase (715 aa).

Residues Asp498 and Asp504 each coordinate Mg(2+). The 61-residue stretch at 565 to 625 folds into the KH domain; sequence PKVCMMQIKP…ETVKKTVAFI (61 aa). The S1 motif domain occupies 635–709; that stretch reads GTCYQASILR…RIDFLLLPKK (75 aa).

The protein belongs to the polyribonucleotide nucleotidyltransferase family. It depends on Mg(2+) as a cofactor.

The protein localises to the cytoplasm. The catalysed reaction is RNA(n+1) + phosphate = RNA(n) + a ribonucleoside 5'-diphosphate. Functionally, involved in mRNA degradation. Catalyzes the phosphorolysis of single-stranded polyribonucleotides processively in the 3'- to 5'-direction. This is Polyribonucleotide nucleotidyltransferase from Aster yellows witches'-broom phytoplasma (strain AYWB).